Here is a 261-residue protein sequence, read N- to C-terminus: Flagellar L-ring protein (261 aa).

Positions 1–15 (MKRLLCLLLLTTLTG) are cleaved as a signal peptide. Cys-16 carries N-palmitoyl cysteine lipidation. Cys-16 is lipidated: S-diacylglycerol cysteine. A compositionally biased stretch (basic and acidic residues) spans 121 to 133 (KSADAELSKKNDS). The disordered stretch occupies residues 121–140 (KSADAELSKKNDSSMDPLQV).

This sequence belongs to the FlgH family. In terms of assembly, the basal body constitutes a major portion of the flagellar organelle and consists of four rings (L,P,S, and M) mounted on a central rod.

Its subcellular location is the cell outer membrane. The protein localises to the bacterial flagellum basal body. Functionally, assembles around the rod to form the L-ring and probably protects the motor/basal body from shearing forces during rotation. This chain is Flagellar L-ring protein, found in Aliivibrio salmonicida (strain LFI1238) (Vibrio salmonicida (strain LFI1238)).